Reading from the N-terminus, the 359-residue chain is RNA 3'-terminal phosphate cyclase (359 aa).

Residues Gln100 and 291 to 294 (HASD) contribute to the ATP site. The active-site Tele-AMP-histidine intermediate is the His317.

Belongs to the RNA 3'-terminal cyclase family. Type 1 subfamily.

The protein localises to the cytoplasm. It carries out the reaction a 3'-end 3'-phospho-ribonucleotide-RNA + ATP = a 3'-end 2',3'-cyclophospho-ribonucleotide-RNA + AMP + diphosphate. Its function is as follows. Catalyzes the conversion of 3'-phosphate to a 2',3'-cyclic phosphodiester at the end of RNA. The mechanism of action of the enzyme occurs in 3 steps: (A) adenylation of the enzyme by ATP; (B) transfer of adenylate to an RNA-N3'P to produce RNA-N3'PP5'A; (C) and attack of the adjacent 2'-hydroxyl on the 3'-phosphorus in the diester linkage to produce the cyclic end product. The biological role of this enzyme is unknown but it is likely to function in some aspects of cellular RNA processing. The chain is RNA 3'-terminal phosphate cyclase from Hyperthermus butylicus (strain DSM 5456 / JCM 9403 / PLM1-5).